We begin with the raw amino-acid sequence, 110 residues long: Parvalbumin alpha (110 aa).

EF-hand domains follow at residues lysine 39–asparagine 74 and leucine 78–serine 110. Positions 52, 54, 56, 58, 60, 63, 91, 93, 95, 97, and 102 each coordinate Ca(2+).

The protein belongs to the parvalbumin family.

Its function is as follows. In muscle, parvalbumin is thought to be involved in relaxation after contraction. It binds two calcium ions. In Aquarana catesbeiana (American bullfrog), this protein is Parvalbumin alpha.